The following is a 705-amino-acid chain: Double-strand break repair protein MRE11 (705 aa).

Positions 15, 17, 55, and 122 each coordinate Mn(2+). Residue His123 is the Proton donor of the active site. 3 residues coordinate Mn(2+): His220, His248, and His250. The span at 505-514 (RSLRSKEDSR) shows a compositional bias: basic and acidic residues. Residues 505–705 (RSLRSKEDSR…TRNYGAVRRR (201 aa)) form a disordered region. Polar residues-rich tracts occupy residues 515–538 (FTSS…LNSF) and 589–605 (SMKQ…SSAA). Basic residues predominate over residues 641 to 663 (GRKRAAPRGGRGRGRGATAKRGR).

This sequence belongs to the MRE11/RAD32 family. Component of the MRN complex composed of two heterodimers RAD50/MRE11 associated with a single NBS1. Requires Mn(2+) as cofactor.

The protein localises to the nucleus. The protein resides in the chromosome. Core component of the MRN complex, which plays a central role in double-strand break (DSB) repair, DNA recombination, maintenance of telomere integrity and meiosis. The MRN complex is involved in the repair of DNA double-strand breaks (DSBs) via homologous recombination (HR), an error-free mechanism which primarily occurs during S and G2 phases. The complex (1) mediates the end resection of damaged DNA, which generates proper single-stranded DNA, a key initial steps in HR, and is (2) required for the recruitment of other repair factors and efficient activation of ATM and ATR upon DNA damage. Within the MRN complex, MRE11 possesses both single-strand endonuclease activity and double-strand-specific 3'-5' exonuclease activity. MRE11 first endonucleolytically cleaves the 5' strand at DNA DSB ends to prevent non-homologous end joining (NHEJ) and licence HR. It then generates a single-stranded DNA gap via 3' to 5' exonucleolytic degradation, which is required for single-strand invasion and recombination. The chain is Double-strand break repair protein MRE11 from Oryza sativa subsp. indica (Rice).